The chain runs to 274 residues: Bis(5'-nucleosyl)-tetraphosphatase, symmetrical (274 aa).

The protein belongs to the Ap4A hydrolase family.

It catalyses the reaction P(1),P(4)-bis(5'-adenosyl) tetraphosphate + H2O = 2 ADP + 2 H(+). Functionally, hydrolyzes diadenosine 5',5'''-P1,P4-tetraphosphate to yield ADP. The protein is Bis(5'-nucleosyl)-tetraphosphatase, symmetrical of Buchnera aphidicola subsp. Acyrthosiphon pisum (strain Tuc7).